The sequence spans 451 residues: DNA double-strand break repair nuclease NurA (451 aa).

Mn(2+) contacts are provided by Asp-51 and Asp-126.

The protein belongs to the NurA family. Homodimer. Interacts with HerA. Mn(2+) is required as a cofactor.

Its activity is regulated as follows. Exonuclease activity is stimulated in the presence of HerA. In terms of biological role, involved in DNA double-strand break (DSB) repair. Probably acts with HerA to stimulate resection of the 5' strand and produce the long 3' single-strand that is required for RadA loading. Exhibits 5' endonuclease activity and both 5' and 3' exonuclease activities. The chain is DNA double-strand break repair nuclease NurA from Pyrococcus furiosus (strain ATCC 43587 / DSM 3638 / JCM 8422 / Vc1).